Here is a 33-residue protein sequence, read N- to C-terminus: VIGGDEXDINEHRSLALMYXSWSHRFIXXGXLI.

The 33-residue stretch at 1–33 folds into the Peptidase S1 domain; the sequence is VIGGDEXDINEHRSLALMYXSWSHRFIXXGXLI.

Belongs to the peptidase S1 family. Snake venom subfamily. Homodimer. Expressed by the venom gland.

Its subcellular location is the secreted. The enzyme catalyses Selective cleavage of Arg-|-Xaa bond in fibrinogen, to form fibrin, and release fibrinopeptide A. The specificity of further degradation of fibrinogen varies with species origin of the enzyme.. Thrombin-like snake venom serine protease that displays clotting activity on fibrinogen. Shows both arginine-ester hydrolase and amidase activities on synthetic substrates. Also shows proteolytic activity toward casein. In Cerastes cerastes (Horned desert viper), this protein is Thrombin-like enzyme RP34.